The following is a 550-amino-acid chain: MELVDTPSLEVFEDVVVDRQVAGFDPSFWGDYFITNQKSQSEAWMNERAEELKNEVRSMFQNVTGILQTMNLIDTIQLLGLDYHFMEEIAKALDHLKDVDMSKYGLYEVALHFRLLRQKGFNISSDVFKKYKDKEGKFMEELKDDAKGLLSLYNAAYFGTKEETILDEAISFTKDNLTSLLKDLNPPFAKLVSLTLKTPIQRSMKRIFTRSYISIYQDEPTLNETILELAKLDFNMLQCLHQKELKKICAWWNNLNLDIMHLNFIRDRVVECYCWSMVIRHEPSCSRARLISTKLLMLITVLDDTYDSYSTLEESRLLTDAIQRWNPNEVDQLPEYLRDFFLKMLNIFQEFENELAPEEKFRILYLKEEWKIQSQSYFKECQWRDDNYVPKLEEHMRLSIISVGFVLFYCGFLSGMEEAVATKDAFEWFASFPKIIEACATIIRITNDITSMEREQKRAHVASTVDCYMKEYGTSKDVACEKLLGFVEDAWKTINEELLTETGLSREVIELSFHSAQTTEFVYKHVDAFTEPNTTMKENIFSLLVHPIPI.

4 residues coordinate Mg(2+): Asp303, Asp307, Ser451, and Glu455. The DDXXD motif signature appears at 303 to 307 (DDTYD).

The protein belongs to the terpene synthase family. Tpsa subfamily. The cofactor is Mg(2+). It depends on Mn(2+) as a cofactor. As to expression, expressed only in young rhizomes. Not detected in leaves, roots and mature rhizomes.

The catalysed reaction is (2E,6E)-farnesyl diphosphate = (S)-beta-bisabolene + diphosphate. Functionally, sesquiterpene synthase involved in the biosynthesis of bisabolene. The sequence is that of (S)-beta-bisabolene synthase (TPS1) from Zingiber officinale (Ginger).